The sequence spans 591 residues: Reduced folate transporter (591 aa).

Methionine 1 carries the N-acetylmethionine modification. The Cytoplasmic segment spans residues 1 to 29 (MVPSSPAVEKQVPVEPGPDPELRSWRHLV). The residue at position 5 (serine 5) is a Phosphoserine. A helical transmembrane segment spans residues 30 to 50 (CYLCFYGFMAQIRPGESFITP). Positions 48 and 49 each coordinate folate. The Extracellular portion of the chain corresponds to 51-64 (YLLGPDKNFTREQV). Asparagine 58 carries an N-linked (GlcNAc...) asparagine glycan. The helical transmembrane segment at 65–87 (TNEITPVLSYSYLAVLVPVFLLT) threads the bilayer. Residues 88 to 91 (DYLR) are Cytoplasmic-facing. A helical transmembrane segment spans residues 92-112 (YTPVLLLQGLSFVSVWLLLLL). Residues 113 to 116 (GHSV) are Extracellular-facing. Residues 117 to 139 (AHMQLMELFYSVTMAARIAYSSY) form a helical membrane-spanning segment. 2 residues coordinate folate: glutamate 123 and arginine 133. The 2',3'-cGAMP site is built by arginine 133, isoleucine 134, serine 137, tyrosine 149, and arginine 157. Residues 140 to 153 (IFSLVRPARYQRVA) are Cytoplasmic-facing. Residues 154–178 (GYSRAAVLLGVFTSSVLGQLLVTVG) form a helical membrane-spanning segment. Residue valine 164 coordinates folate. Topologically, residues 179–183 (RVSFS) are extracellular. The chain crosses the membrane as a helical span at residues 184–202 (TLNYISLAFLTFSVVLALF). Topologically, residues 203 to 266 (LKRPKRSLFF…ELGDSLRRPQ (64 aa)) are cytoplasmic. Phosphoserine is present on serine 225. A helical membrane pass occupies residues 267 to 292 (LRLWSLWWVFNSAGYYLVVYYVHILW). The folate site is built by tyrosine 281, tyrosine 282, and tyrosine 286. Tyrosine 282 contributes to the 2',3'-cGAMP binding site. Residues 293–304 (NEVDPTTNSARV) lie on the Extracellular side of the membrane. A helical transmembrane segment spans residues 305-327 (YNGAADAASTLLGAITSFAAGFV). Serine 321 contributes to the 2',3'-cGAMP binding site. The Cytoplasmic segment spans residues 328–333 (KIRWAR). Residues 334 to 354 (WSKLLIAGVTATQAGLVFLLA) traverse the membrane as a helical segment. The Extracellular portion of the chain corresponds to 355–360 (HTRHPS). A helical transmembrane segment spans residues 361–384 (SIWLCYAAFVLFRGSYQFLVPIAT). Folate is bound by residues arginine 373 and glutamine 377. Glutamine 377, proline 381, threonine 384, lysine 393, cysteine 396, and phenylalanine 400 together coordinate 2',3'-cGAMP. Over 385–398 (FQIASSLSKELCAL) the chain is Cytoplasmic. Residues 399 to 422 (VFGVNTFFATIVKTIITFIVSDVR) form a helical membrane-spanning segment. The required for substrate-binding stretch occupies residues 407–419 (ATIVKTIITFIVS). At 423-430 (GLGLPVRK) the chain is on the extracellular side. A helical membrane pass occupies residues 431 to 455 (QFQLYSVYFLILSIIYFLGAMLDGL). Residues 456-591 (RHCQRGHHPR…PSDGVQNVNQ (136 aa)) are Cytoplasmic-facing. Serine 474, serine 485, serine 499, and serine 503 each carry phosphoserine.

Belongs to the reduced folate carrier (RFC) transporter (TC 2.A.48) family. Placenta, liver, and to a much smaller extent, in lung.

The protein localises to the cell membrane. The protein resides in the apical cell membrane. It is found in the basolateral cell membrane. It carries out the reaction 5-amino-1-(5-phospho-beta-D-ribosyl)imidazole-4-carboxamide(in) + (6S)-5-methyl-5,6,7,8-tetrahydrofolate(out) = 5-amino-1-(5-phospho-beta-D-ribosyl)imidazole-4-carboxamide(out) + (6S)-5-methyl-5,6,7,8-tetrahydrofolate(in). The catalysed reaction is 2',3'-cGAMP(out) + 5-amino-1-(5-phospho-beta-D-ribosyl)imidazole-4-carboxamide(in) = 2',3'-cGAMP(in) + 5-amino-1-(5-phospho-beta-D-ribosyl)imidazole-4-carboxamide(out). The enzyme catalyses 3',3'-cGAMP(out) + 5-amino-1-(5-phospho-beta-D-ribosyl)imidazole-4-carboxamide(in) = 3',3'-cGAMP(in) + 5-amino-1-(5-phospho-beta-D-ribosyl)imidazole-4-carboxamide(out). In terms of biological role, antiporter that mediates the import of reduced folates or a subset of cyclic dinucleotides, driven by the export of organic anions. Acts as an importer of immunoreactive cyclic dinucleotides, such as cyclic GMP-AMP (2'-3'-cGAMP), an immune messenger produced in response to DNA virus in the cytosol, and its linkage isomer 3'-3'-cGAMP, thus playing a role in triggering larger immune responses. Mechanistically, acts as a secondary active transporter, which exports intracellular organic anions down their concentration gradients to facilitate the uptake of its substrates. Has high affinity for N5-methyltetrahydrofolate, the predominant circulating form of folate. Also mediates the import of antifolate drug methotrexate. 5-amino-4-imidazolecarboxamide riboside (AICAR), when phosphorylated to AICAR monophosphate, can serve as an organic anion for antiporter activity. The sequence is that of Reduced folate transporter from Homo sapiens (Human).